A 218-amino-acid chain; its full sequence is Large ribosomal subunit protein uL16 (218 aa).

It belongs to the universal ribosomal protein uL16 family. In terms of assembly, component of the large ribosomal subunit. Mature ribosomes consist of a small (40S) and a large (60S) subunit. The 40S subunit contains about 33 different proteins and 1 molecule of RNA (18S). The 60S subunit contains about 49 different proteins and 3 molecules of RNA (28S, 5.8S and 5S).

The polypeptide is Large ribosomal subunit protein uL16 (RpL10) (Drosophila melanogaster (Fruit fly)).